Consider the following 758-residue polypeptide: Putative transcriptional regulatory protein YJL206C (758 aa).

Residues 47–73 constitute a DNA-binding region (zn(2)-C6 fungal-type); that stretch reads CIACRKRKVRCSGNIPCRLCQTNSYEC.

This sequence belongs to the ASG1 family.

The protein resides in the nucleus. The chain is Putative transcriptional regulatory protein YJL206C from Saccharomyces cerevisiae (strain ATCC 204508 / S288c) (Baker's yeast).